The chain runs to 462 residues: UDP-N-acetylmuramoylalanine--D-glutamate ligase (462 aa).

Position 111-117 (111-117 (GTNGKTT)) interacts with ATP.

The protein belongs to the MurCDEF family.

Its subcellular location is the cytoplasm. It carries out the reaction UDP-N-acetyl-alpha-D-muramoyl-L-alanine + D-glutamate + ATP = UDP-N-acetyl-alpha-D-muramoyl-L-alanyl-D-glutamate + ADP + phosphate + H(+). Its pathway is cell wall biogenesis; peptidoglycan biosynthesis. In terms of biological role, cell wall formation. Catalyzes the addition of glutamate to the nucleotide precursor UDP-N-acetylmuramoyl-L-alanine (UMA). This Trichodesmium erythraeum (strain IMS101) protein is UDP-N-acetylmuramoylalanine--D-glutamate ligase.